We begin with the raw amino-acid sequence, 46 residues long: Phospholipase A2 superbin c (46 aa).

Ca(2+) is bound by residues Tyr28, Gly30, and Gly32. Cys29 and Cys45 are joined by a disulfide.

The cofactor is Ca(2+). In terms of tissue distribution, expressed by the venom gland.

It is found in the secreted. It carries out the reaction a 1,2-diacyl-sn-glycero-3-phosphocholine + H2O = a 1-acyl-sn-glycero-3-phosphocholine + a fatty acid + H(+). Snake venom phospholipase A2 (PLA2) that inhibits collagen-induced platelet aggregation. In terms of inhibition of platelet aggregation, superbin c is more potent as superbin d. PLA2 catalyzes the calcium-dependent hydrolysis of the 2-acyl groups in 3-sn-phosphoglycerides. The chain is Phospholipase A2 superbin c from Austrelaps superbus (Lowland copperhead snake).